Reading from the N-terminus, the 520-residue chain is Cholesterol side-chain cleavage enzyme, mitochondrial (520 aa).

Residues 1–39 (MLARGLALRSVLVKGCQPFLSAPRECPGHPRVGTGEGAC) constitute a mitochondrion transit peptide. Cys-461 provides a ligand contact to heme.

It belongs to the cytochrome P450 family. As to quaternary structure, interacts with FDX1/adrenodoxin. Heme is required as a cofactor.

The protein localises to the mitochondrion inner membrane. The catalysed reaction is 6 reduced [adrenodoxin] + cholesterol + 3 O2 + 6 H(+) = 4-methylpentanal + pregnenolone + 6 oxidized [adrenodoxin] + 4 H2O. The enzyme catalyses 2 reduced [adrenodoxin] + cholesterol + O2 + 2 H(+) = (22R)-hydroxycholesterol + 2 oxidized [adrenodoxin] + H2O. It carries out the reaction (22R)-hydroxycholesterol + 2 reduced [adrenodoxin] + O2 + 2 H(+) = (20R,22R)-20,22-dihydroxycholesterol + 2 oxidized [adrenodoxin] + H2O. It catalyses the reaction (20R,22R)-20,22-dihydroxycholesterol + 2 reduced [adrenodoxin] + O2 + 2 H(+) = 4-methylpentanal + pregnenolone + 2 oxidized [adrenodoxin] + 2 H2O. It participates in lipid metabolism; C21-steroid hormone metabolism. Its pathway is steroid metabolism; cholesterol metabolism. A cytochrome P450 monooxygenase that catalyzes the side-chain hydroxylation and cleavage of cholesterol to pregnenolone, the precursor of most steroid hormones. Catalyzes three sequential oxidation reactions of cholesterol, namely the hydroxylation at C22 followed with the hydroxylation at C20 to yield 20R,22R-hydroxycholesterol that is further cleaved between C20 and C22 to yield the C21-steroid pregnenolone and 4-methylpentanal. Mechanistically, uses molecular oxygen inserting one oxygen atom into a substrate and reducing the second into a water molecule. Two electrons are provided by NADPH via a two-protein mitochondrial transfer system comprising flavoprotein FDXR (adrenodoxin/ferredoxin reductase) and nonheme iron-sulfur protein FDX1 or FDX2 (adrenodoxin/ferredoxin). The sequence is that of Cholesterol side-chain cleavage enzyme, mitochondrial (CYP11A1) from Sus scrofa (Pig).